We begin with the raw amino-acid sequence, 456 residues long: Probable glycine dehydrogenase (decarboxylating) subunit 1 (456 aa).

This sequence belongs to the GcvP family. N-terminal subunit subfamily. In terms of assembly, the glycine cleavage system is composed of four proteins: P, T, L and H. In this organism, the P 'protein' is a heterodimer of two subunits.

The enzyme catalyses N(6)-[(R)-lipoyl]-L-lysyl-[glycine-cleavage complex H protein] + glycine + H(+) = N(6)-[(R)-S(8)-aminomethyldihydrolipoyl]-L-lysyl-[glycine-cleavage complex H protein] + CO2. The glycine cleavage system catalyzes the degradation of glycine. The P protein binds the alpha-amino group of glycine through its pyridoxal phosphate cofactor; CO(2) is released and the remaining methylamine moiety is then transferred to the lipoamide cofactor of the H protein. This is Probable glycine dehydrogenase (decarboxylating) subunit 1 from Legionella pneumophila (strain Lens).